An 80-amino-acid polypeptide reads, in one-letter code: Kappa-actitoxin-Avd4i (80 aa).

Residues 1–19 (MNKALFLCLVVLCAAVVFA) form the signal peptide. Residues 20 to 31 (AEDLQKAKHAPF) constitute a propeptide that is removed on maturation. Disulfide bonds link C41–C76, C43–C69, and C59–C77.

This sequence belongs to the sea anemone type 3 (BDS) potassium channel toxin family. As to expression, weakly expressed in the ectodermal tissue from the distal and proximal tentacles, body wall, and oral disk.

The protein localises to the secreted. Its subcellular location is the nematocyst. In terms of biological role, blocks Kv3 voltage-gated potassium channels. Reduces blood pressure. In Anemonia viridis (Snakelocks anemone), this protein is Kappa-actitoxin-Avd4i.